The primary structure comprises 183 residues: Protein Syd (183 aa).

The protein belongs to the Syd family.

The protein resides in the cell inner membrane. Interacts with the SecY protein in vivo. May bind preferentially to an uncomplexed state of SecY, thus functioning either as a chelating agent for excess SecY in the cell or as a regulatory factor that negatively controls the translocase function. The protein is Protein Syd of Yersinia enterocolitica serotype O:8 / biotype 1B (strain NCTC 13174 / 8081).